The sequence spans 206 residues: dITP/XTP pyrophosphatase (206 aa).

A substrate-binding site is contributed by 7 to 12 (TSNKDK). The active-site Proton acceptor is the D74. D74 serves as a coordination point for Mg(2+). Residues S75, 159 to 162 (FGYD), K182, and 187 to 188 (HR) each bind substrate.

It belongs to the HAM1 NTPase family. As to quaternary structure, homodimer. Requires Mg(2+) as cofactor.

It carries out the reaction XTP + H2O = XMP + diphosphate + H(+). It catalyses the reaction dITP + H2O = dIMP + diphosphate + H(+). The enzyme catalyses ITP + H2O = IMP + diphosphate + H(+). In terms of biological role, pyrophosphatase that catalyzes the hydrolysis of nucleoside triphosphates to their monophosphate derivatives, with a high preference for the non-canonical purine nucleotides XTP (xanthosine triphosphate), dITP (deoxyinosine triphosphate) and ITP. Seems to function as a house-cleaning enzyme that removes non-canonical purine nucleotides from the nucleotide pool, thus preventing their incorporation into DNA/RNA and avoiding chromosomal lesions. The protein is dITP/XTP pyrophosphatase of Campylobacter hominis (strain ATCC BAA-381 / DSM 21671 / CCUG 45161 / LMG 19568 / NCTC 13146 / CH001A).